We begin with the raw amino-acid sequence, 298 residues long: Oxidoreductase YdhF (298 aa).

The Proton donor role is filled by Tyr-55. NADP(+) is bound by residues 158 to 159 (SN), 209 to 220 (WSCLGGGRLFND), and 263 to 264 (SG).

This sequence belongs to the aldo/keto reductase family. Aldo/keto reductase 2 subfamily.

In terms of biological role, may function as oxidoreductase. The protein is Oxidoreductase YdhF (ydhF) of Escherichia coli (strain K12).